The primary structure comprises 294 residues: Maltose/maltodextrin import ATP-binding protein MalK (294 aa).

Residues 4–233 form the ABC transporter domain; it reads VQLRNVTKAW…PADRFVAGFI (230 aa). ATP is bound at residue 36–43; sequence GPSGCGKS.

It belongs to the ABC transporter superfamily. Maltooligosaccharide importer (TC 3.A.1.1.1) family. In terms of assembly, the complex is composed of two ATP-binding proteins (MalK), two transmembrane proteins (MalG and MalK) and a solute-binding protein (MalE).

The protein resides in the cell inner membrane. It catalyses the reaction D-maltose(out) + ATP + H2O = D-maltose(in) + ADP + phosphate + H(+). Functionally, part of the ABC transporter complex MalEFGK involved in maltose/maltodextrin import. Responsible for energy coupling to the transport system. This Klebsiella aerogenes (Enterobacter aerogenes) protein is Maltose/maltodextrin import ATP-binding protein MalK.